Here is an 83-residue protein sequence, read N- to C-terminus: RNA-binding protein Hfq (83 aa).

The 61-residue stretch at 10 to 70 folds into the Sm domain; that stretch reads DTFLNQVRKE…ISTVMPLRPI (61 aa).

Belongs to the Hfq family. Homohexamer.

RNA chaperone that binds small regulatory RNA (sRNAs) and mRNAs to facilitate mRNA translational regulation in response to envelope stress, environmental stress and changes in metabolite concentrations. Also binds with high specificity to tRNAs. The polypeptide is RNA-binding protein Hfq (Desulfitobacterium hafniense (strain Y51)).